Here is a 137-residue protein sequence, read N- to C-terminus: Acidic phospholipase A2 PL-I (137 aa).

A signal peptide spans 1 to 17 (AVCVSLLGASSIRPLPL). Intrachain disulfides connect cysteine 28/cysteine 89, cysteine 44/cysteine 136, cysteine 46/cysteine 62, cysteine 61/cysteine 117, cysteine 68/cysteine 110, cysteine 78/cysteine 103, and cysteine 96/cysteine 108. The Ca(2+) site is built by tyrosine 45, glycine 47, and glycine 49. The active site involves histidine 65. Residue aspartate 66 coordinates Ca(2+). Aspartate 111 is a catalytic residue.

It depends on Ca(2+) as a cofactor. Expressed by the venom gland.

It is found in the secreted. It catalyses the reaction a 1,2-diacyl-sn-glycero-3-phosphocholine + H2O = a 1-acyl-sn-glycero-3-phosphocholine + a fatty acid + H(+). Functionally, snake venom phospholipase A2 (PLA2) that may act in the hemostasis system of the prey. Exhibits hydrolytic activities, and prefers the anionic micelles (dPPC with deoxycholate) (793 umol/mg/min) to the zwitterionic micelles (dPPC with Triton X-100) (591 umol/mg/min). PLA2 catalyzes the calcium-dependent hydrolysis of the 2-acyl groups in 3-sn-phosphoglycerides. The polypeptide is Acidic phospholipase A2 PL-I (Walterinnesia aegyptia (Desert black snake)).